The following is a 791-amino-acid chain: Lon protease (791 aa).

One can recognise a Lon N-terminal domain in the interval lysine 3 to leucine 209. Position 365–372 (glycine 365–threonine 372) interacts with ATP. Residues threonine 605–glutamate 790 form the Lon proteolytic domain. Active-site residues include serine 696 and lysine 739.

Belongs to the peptidase S16 family. Homohexamer. Organized in a ring with a central cavity.

It is found in the cytoplasm. The catalysed reaction is Hydrolysis of proteins in presence of ATP.. In terms of biological role, ATP-dependent serine protease that mediates the selective degradation of mutant and abnormal proteins as well as certain short-lived regulatory proteins. Required for cellular homeostasis and for survival from DNA damage and developmental changes induced by stress. Degrades polypeptides processively to yield small peptide fragments that are 5 to 10 amino acids long. Binds to DNA in a double-stranded, site-specific manner. The chain is Lon protease from Ureaplasma parvum serovar 3 (strain ATCC 27815 / 27 / NCTC 11736).